The primary structure comprises 1115 residues: Gamma tubulin complex adapter mto1 (1115 aa).

A disordered region spans residues 25–180 (LTDEEVRRIL…NYISSSLDQL (156 aa)). Basic and acidic residues-rich tracts occupy residues 28–41 (EEVR…KEGS) and 56–71 (EASH…DSLK). Polar residues-rich tracts occupy residues 72 to 102 (SDSG…VNKL), 119 to 130 (DTTNFDRLNDNI), and 139 to 151 (PVLT…QSQE). Ser-94 is modified (phosphoserine). Residues 165–176 (SDPSSPNYISSS) are compositionally biased toward low complexity. Residues 445–915 (NEALLLRKQE…ERNSLIKNIV (471 aa)) are a coiled coil. The tract at residues 523 to 537 (LMRMEQQWREDVDQL) is required for interaction with mto2. Positions 1001–1011 (GSTSSIPNSPR) are enriched in polar residues. Disordered stretches follow at residues 1001–1037 (GSTS…AVQR) and 1067–1115 (EQEG…QEHK). 2 positions are modified to phosphoserine: Ser-1005 and Ser-1009. Composition is skewed to basic and acidic residues over residues 1016–1025 (VSLDSEDKKL) and 1067–1084 (EQEG…RLQD). Residues 1072–1102 (KRDKLGARERLQDLIRQNRSLSRQIKTDKES) adopt a coiled-coil conformation. 2 stretches are compositionally biased toward polar residues: residues 1086-1095 (IRQNRSLSRQ) and 1104-1115 (SRSPSISSQEHK).

Interacts with mto2; the interaction is direct and required for efficient binding to the gamma-tubulin complex. Interacts with gamma tubulin complex subunits alp4, alp6 and gtb1. Interacts with mcp6.

The protein localises to the cytoplasm. Its subcellular location is the cytoskeleton. It is found in the microtubule organizing center. The protein resides in the spindle pole body. Spindle pole body (SPB) component that acts as the gamma-tubulin complex-binding protein of the SPB outer plaque. Promotes nucleation of all cytoplasmic microtubules by recruiting the gamma-tubulin complex to the spindle pole body (SPB), to the interphase microtubule organizing center (iMTOC), and to the equatorial MTOC (eMTOC) during anaphase. This is Gamma tubulin complex adapter mto1 from Schizosaccharomyces pombe (strain 972 / ATCC 24843) (Fission yeast).